The following is an 862-amino-acid chain: Protein PRQFV-amide (862 aa).

Residues 1 to 20 (MSSQLLICSVFVLFTFGPNS) form the signal peptide. Positions 21–79 (FPSCLAQEQAGNSDATQLSADAKAPESAKDKSGDVQNDGTKSVRSKRDLEIDFGSGDVQ) are excised as a propeptide. Residues 32–68 (NSDATQLSADAKAPESAKDKSGDVQNDGTKSVRSKRD) are disordered. The segment covering 43–53 (KAPESAKDKSG) has biased composition (basic and acidic residues). At Val86 the chain carries Valine amide. The propeptide occupies 90–149 (AAPPVFQTPLVQDKISGFIPSETESPVIGEFAFPGSVFMDDEEALGAEEEPMDDEDLEFY). Val156 carries the valine amide modification. Residues 160–175 (GIDDYLLQEKLKDFIE) constitute a propeptide that is removed on maturation. A valine amide mark is found at Val182, Val190, Val198, Val206, Val214, Val222, Val230, Val238, and Val246. Positions 250–259 (EADPSFLFED) are excised as a propeptide. Position 266 is a valine amide (Val266). Residues 270–300 (SLDFLGGANWYNPYDVTMEPQSEGSDLQGFS) constitute a propeptide that is removed on maturation. Residue Val307 is modified to Valine amide. The propeptide occupies 311-319 (DAFDMFEFS). At Val326 the chain carries Valine amide. Residues 330–338 (DQDEMFDFS) constitute a propeptide that is removed on maturation. Val345 is modified (valine amide). Positions 349-357 (DLQEFFDLS) are excised as a propeptide. Val364 is modified (valine amide). A propeptide spanning residues 368–376 (EFDDEIDFS) is cleaved from the precursor. The residue at position 383 (Val383) is a Valine amide. Positions 387–395 (ENDDDFDLS) are excised as a propeptide. A Valine amide modification is found at Val402. Positions 406 to 414 (ENDDEFDLS) are excised as a propeptide. Valine amide is present on Val421. Residues 424–434 (RENDDELEFSK) show a composition bias toward basic and acidic residues. The disordered stretch occupies residues 424–528 (RENDDELEFS…NNDDLDFSKR (105 aa)). Residues 425-433 (ENDDELEFS) constitute a propeptide that is removed on maturation. The residue at position 440 (Val440) is a Valine amide. Positions 441 to 452 (GKREDDEIDFSK) are enriched in basic and acidic residues. Positions 444-451 (EDDEIDFS) are excised as a propeptide. Val458 is subject to Valine amide. Basic and acidic residues predominate over residues 459–471 (GKRENDGEIDFSK). A propeptide spanning residues 462-470 (ENDGEIDFS) is cleaved from the precursor. Residue Val477 is modified to Valine amide. A compositionally biased stretch (basic and acidic residues) spans 478–490 (GKRENDDEIDFSK). Positions 481 to 489 (ENDDEIDFS) are excised as a propeptide. Val496 bears the Valine amide mark. Residues 497 to 508 (GKREDGEIDFSK) are compositionally biased toward basic and acidic residues. Positions 500–507 (EDGEIDFS) are excised as a propeptide. Val514 is modified (valine amide). A compositionally biased stretch (basic and acidic residues) spans 515 to 527 (GKRENNDDLDFSK). The propeptide occupies 518 to 526 (ENNDDLDFS). Val533 bears the Valine amide mark. A propeptide spanning residues 537–545 (EVDDEIDFS) is cleaved from the precursor. Residues 549–634 (RQFVGKREND…RQFVGKREND (86 aa)) are disordered. Residue Val552 is modified to Valine amide. Basic and acidic residues predominate over residues 553-565 (GKRENDDDLDFSK). The propeptide occupies 556–564 (ENDDDLDFS). Residue Val571 is modified to Valine amide. Residues 572 to 584 (GKRENDDDLEFSK) are compositionally biased toward basic and acidic residues. The propeptide occupies 575-583 (ENDDDLEFS). Position 590 is a valine amide (Val590). The propeptide occupies 594 to 602 (ENDPLLDFS). At Val609 the chain carries Valine amide. Residues 610–622 (GKRENDDDLDFSK) are compositionally biased toward basic and acidic residues. The propeptide occupies 613-621 (ENDDDLDFS). Valine amide is present on Val628. The propeptide occupies 632–640 (ENDPLIDFS). Val647 bears the Valine amide mark. A propeptide spanning residues 651-659 (ESDGDFELS) is cleaved from the precursor. At Val666 the chain carries Valine amide. Positions 670–677 (DVDGPGLS) are excised as a propeptide. Val684 bears the Valine amide mark. Positions 688-695 (EDYDIDFA) are excised as a propeptide. A Valine amide modification is found at Val702. Positions 706-714 (GNEDEFEMS) are excised as a propeptide. Val721 carries the valine amide modification. Residues 724-757 (RNFEELDQDFLRHMHDILDKRIPQFVSLPSLTAA) constitute a propeptide that is removed on maturation. Residue Val764 is modified to Valine amide. A propeptide spanning residues 768-812 (SDAAFLETLRHLRDYVGGQDEQNVSEFSYQHPYPSDLNDVGLIQQ) is cleaved from the precursor. Position 819 is a valine amide (Val819). The propeptide occupies 823–862 (GGDVDDINTTYRLGDFVSQPMSFVEEPSWLCRQLNAFGIS).

Expressed abundantly in the abdominal ganglion, much less in the pedal and cerebral ganglia, and rarely in the buccal and pleural ganglia.

Its subcellular location is the secreted. Its function is as follows. PRQFV-amide may act as a modulator within the feeding system as well as in other systems of Aplysia. The chain is Protein PRQFV-amide from Aplysia californica (California sea hare).